We begin with the raw amino-acid sequence, 257 residues long: tRNA dimethylallyltransferase (257 aa).

Residue 15 to 22 (GPTASGKS) participates in ATP binding. Substrate is bound at residue 17–22 (TASGKS).

This sequence belongs to the IPP transferase family. In terms of assembly, monomer. The cofactor is Mg(2+).

It catalyses the reaction adenosine(37) in tRNA + dimethylallyl diphosphate = N(6)-dimethylallyladenosine(37) in tRNA + diphosphate. Functionally, catalyzes the transfer of a dimethylallyl group onto the adenine at position 37 in tRNAs that read codons beginning with uridine, leading to the formation of N6-(dimethylallyl)adenosine (i(6)A). The protein is tRNA dimethylallyltransferase of Oenococcus oeni (strain ATCC BAA-331 / PSU-1).